Consider the following 44-residue polypeptide: DNA-directed RNA polymerase subunit Rpo12 (44 aa).

3 residues coordinate Zn(2+): Cys-8, Cys-22, and Cys-25.

This sequence belongs to the archaeal Rpo12/eukaryotic RPC10 RNA polymerase subunit family. Part of the RNA polymerase complex. The cofactor is Zn(2+).

It is found in the cytoplasm. It carries out the reaction RNA(n) + a ribonucleoside 5'-triphosphate = RNA(n+1) + diphosphate. In terms of biological role, DNA-dependent RNA polymerase (RNAP) catalyzes the transcription of DNA into RNA using the four ribonucleoside triphosphates as substrates. This Haloquadratum walsbyi (strain DSM 16790 / HBSQ001) protein is DNA-directed RNA polymerase subunit Rpo12.